The chain runs to 199 residues: Recombination protein RecR (199 aa).

A C4-type zinc finger spans residues 58 to 73 (CRICYNITDTEVCNIC). The Toprim domain maps to 81 to 176 (SLICVVSHPM…KVTRIAHGVP (96 aa)).

The protein belongs to the RecR family.

Its function is as follows. May play a role in DNA repair. It seems to be involved in an RecBC-independent recombinational process of DNA repair. It may act with RecF and RecO. The protein is Recombination protein RecR of Thermoanaerobacter pseudethanolicus (strain ATCC 33223 / 39E) (Clostridium thermohydrosulfuricum).